Consider the following 761-residue polypeptide: Isocyanide synthase xanB (761 aa).

The disordered stretch occupies residues 24 to 128 (LLGSYETKAP…GKGTKADPSH (105 aa)). Residues 36–48 (ETSEIAASSSSSE) are compositionally biased toward low complexity. Over residues 93–102 (TVSTPQSSDN) the composition is skewed to polar residues. The span at 115-126 (FKDEGKGTKADP) shows a compositional bias: basic and acidic residues.

It belongs to the isocyanide synthase family.

The protein operates within secondary metabolite biosynthesis. Its function is as follows. Isocyanide synthase; part of the gene cluster that mediates the biosynthesis of the isocyanide xanthocillin and its derivatives. The first step of the pathway consists in the conversion of tyrosine into a vinyl-isonitrile intermediate by the isocyanide synthase xanB. Subsequent oxidative dimerization of this intermediate to form xanthocillin may involve the cytochrome P450 monooxygenase xanG, whose expression is coregulated with that of XanB. Xanthocillin can be further modified by the isonitrile hydratase-like protein xanA which introduces N-formyl groups and the methyltransferase xanE which introduces methyl groups, leading to the production of several derivatives including fumiformamide. Finally, fumiformamide can be subject to both oxidative and reductive cyclization to yield melanocins E and F, respectively. The sequence is that of Isocyanide synthase xanB from Aspergillus fumigatus (strain ATCC MYA-4609 / CBS 101355 / FGSC A1100 / Af293) (Neosartorya fumigata).